Consider the following 636-residue polypeptide: Signal recognition particle receptor subunit alpha (636 aa).

Disordered regions lie at residues 132-205 (APTT…ELSK), 217-246 (IQKH…APRV), and 280-314 (IRGT…TKGT). Basic and acidic residues-rich tracts occupy residues 137-146 (KKFEDSEKAK) and 153-165 (IETR…EKAK). The residue at position 177 (S177) is a Phosphoserine. Positions 217-238 (IQKHGKGLDKSSKSTKSDTPKE) are enriched in basic and acidic residues. A Phosphothreonine modification is found at T283. A phosphoserine mark is found at S295, S296, and S297. Residues 302 to 312 (ATQNTKPSATK) show a composition bias toward polar residues. T303 is subject to Phosphothreonine. The segment at 417–634 (YVVTFCGVNG…NAKAVVAALM (218 aa)) is NG domain. GTP-binding positions include 423–430 (GVNGVGKS) and 518–522 (DTAGR). T576 carries the post-translational modification Phosphothreonine. 586-589 (TKFD) contacts GTP.

The protein belongs to the GTP-binding SRP family. Heterodimer with SRPRB. Interacts with the signal recognition particle (SRP) complex subunit SRP54.

The protein localises to the endoplasmic reticulum membrane. Component of the SRP (signal recognition particle) receptor. Ensures, in conjunction with the signal recognition particle, the correct targeting of the nascent secretory proteins to the endoplasmic reticulum membrane system. Forms a guanosine 5'-triphosphate (GTP)-dependent complex with the SRP subunit SRP54. SRP receptor compaction and GTPase rearrangement drive SRP-mediated cotranslational protein translocation into the ER. In Mus musculus (Mouse), this protein is Signal recognition particle receptor subunit alpha.